Reading from the N-terminus, the 1902-residue chain is MATRRAIVPEQQQEPSSPASEISKNKDWQEQSEMVSPTEEEGFCWPGPKSVALRRASEGFGFTLRHFIVYPPESAVHTSVKDEENGNRGVNAGRPRNRLEPMDTIFVKQVKEGGPAHEAGLCTGDRIIKVNGESVIGKTYSQVIALIQNSDSTLELSVMPKDEDILQLAYSQDAYLKGNDSYSGNAQNIPEPPPLCYPRVQPEASVMAQPVEVLPSGTSLATQQSSCPLRTATTQPERSYRVEIQVPPSPTDIVKSNTAVCVCNEAVRTVIVPSEKVVDLSSNRTNRAGPLHRTGLADPSILKRTTSPSSSTPNVPMVPSTRHFDSAGVIGKPPSYGGLAENMFSTRPAAHAEESPSPTNHYASPGSHQHIDWRDYKTYKEYIDNRRMLMYGCRTIQERLDSLRAASQNTTDYNQMLPNRSSGQVRRRSTSHDRVPQSAQMRKRSVSQERLEDPVLMKEWPRSASQDTLTSPAVASRNHRSELWDYLTRKGDFDQFIVETHSNGERNTNYQWSGFTEQDDRRGINERPRQHAFHMSLRSPNFTMAPVPFTSSDNRRGGARVLASAHPLQMVHPDMKTIQPTRNFQNSSRAPHPRPALSDRSGFAISKSNSVKIPTPYAAKPHSPSVRSDDGIVRDQKPVNYLHVGGPQNCQRKTQTESALGFHLDSIKTSMSASSSSPSTSQKVDVKITQSPEANAGDSNAVLSPVDQVVLRERPSPGQQTSPPIRQQSYIFAVNEQEGASDTTCWLPNDARREVHIKRIEQRKASGSNSPGDSLASIPFIDEPTSPSIDHEIGNIPASAVISISAQPLPTITTVPPSPTSPVPLMRRHFSHDHDSIRPIVLEVNSKTERSKSCDEGLDDYKEDGKLCLKQGSSLKGIKARENVQSSEDSESRKDSSSDVFSDSNKEGFLYFRQLTTEKGKRVSGSIRPWKQMYVVLRGSALYLQKDKKEQTGHSSAQSDEEQLIGINGCLIDISYSETKRKNVFRLTTSDREFLFQAEDRDDMLAWIKAIQENGNLNDEQTDQASRVLISKRIKEYNTMMSSSSNKTEPSPKAQRQTLSIRQQFRAGKPDDDISPPKDKGSWRRIMKKPFEKKPTTGGTFGVRLDDCPPAHNNKYVPLIVDVCCKLVEDRGLETTGIYRVPGNNAAISSMQEELNKGNTDIDIQDDKWRDLNVISSLLKSFFRKLPDPLFTNEKYNDFIEANRKEDPVERLKTLKRLILDLPDHHYETLKYLSAHLKTVADSSEKNKMEPRNLAIVFGPTLVRTSEDNMTHMVTHMPDQYKIVETLIQKHDWFFSEESADEPITTVHEESTVESQPVPNIDHLLPNIGRTGLSPGDVSDSATSDSAKSKGSWGSGKDQYSRELLVSSLFAAASRKRKKQKDKPQPSSSEDELDNVFYQKELSQVEFQKPDKQNVDKDMDLKAKANALSLKDADNVKGTNIIKEDKLEKDIMYSEPTSPCPPKLLEPPIANHGLQAPSNDKNIPQINFQMEESMSDSGTMLSTSSQASVQGSKPKVVSPEFKGSDFLTADVSSITSDYSTTSSTIYMTGLDSILISPEVQSVAESKGEEADDERSELVSEGRPMETDSENDFPIFASSLAFDRRHQSKAEEPSRNVQVNSEGSPSCTEGSITPKMDRRRFSSHKLIECDTLSRKKSVQQKTDSDCSAESKTEETLSDAQEAVKKGRSLSIVDPTGNNEPEEPAWRIKITERLKLRLKASADDMFGIGSQKANAAETRKKKNIRRRHTLGGHRDFAEISVLNAWKINEPSSKEAELSAVDRLKPKCPSQDLSISEWLVRERLRTSTSELSTVEPEEKHISETTGQKESASASPPPSSPSQVSTAVLPAGSDSPSHETAPQPDDQMNGDSFQSKNKNNFSPAVDAHPHKLSGTQVVRSRFYQYL.

Disordered stretches follow at residues 1–44 (MATR…EGFC), 78–97 (TSVK…RPRN), 284–317 (RTNR…NVPM), 348–369 (PAAH…GSHQ), 409–450 (NTTD…SQER), 581–603 (TRNF…RSGF), 613–632 (IPTP…DDGI), and 879–902 (KARE…DVFS). The span at 10–22 (EQQQEPSSPASEI) shows a compositional bias: polar residues. Positions 77–162 (HTSVKDEENG…TLELSVMPKD (86 aa)) constitute a PDZ domain. The segment covering 305 to 317 (TTSPSSSTPNVPM) has biased composition (low complexity). Residues 409-424 (NTTDYNQMLPNRSSGQ) are compositionally biased toward polar residues. The 114-residue stretch at 903-1016 (DSNKEGFLYF…WIKAIQENGN (114 aa)) folds into the PH domain. The span at 1039–1063 (TMMSSSSNKTEPSPKAQRQTLSIRQ) shows a compositional bias: polar residues. Residues 1039–1095 (TMMSSSSNKTEPSPKAQRQTLSIRQQFRAGKPDDDISPPKDKGSWRRIMKKPFEKKP) form a disordered region. The segment covering 1068-1082 (GKPDDDISPPKDKGS) has biased composition (basic and acidic residues). Residues 1103–1295 (VRLDDCPPAH…TLIQKHDWFF (193 aa)) enclose the Rho-GAP domain. Disordered regions lie at residues 1306 to 1357 (TVHE…GSGK), 1375 to 1394 (RKRK…DELD), 1494 to 1520 (MSDS…VSPE), 1559 to 1704 (VQSV…EPAW), 1729 to 1748 (QKAN…RHTL), and 1803 to 1890 (TSTS…KLSG). Over residues 1339 to 1357 (SDSATSDSAKSKGSWGSGK) the composition is skewed to low complexity. Polar residues predominate over residues 1494-1511 (MSDSGTMLSTSSQASVQG). Composition is skewed to basic and acidic residues over residues 1575–1585 (SELVSEGRPME) and 1601–1613 (FDRR…EEPS). Polar residues predominate over residues 1614–1630 (RNVQVNSEGSPSCTEGS). Basic and acidic residues-rich tracts occupy residues 1634-1652 (KMDR…DTLS) and 1661-1673 (TDSD…KTEE). Basic residues predominate over residues 1737–1748 (RKKKNIRRRHTL). Over residues 1865–1878 (NGDSFQSKNKNNFS) the composition is skewed to polar residues.

The protein localises to the golgi apparatus membrane. It localises to the cell junction. It is found in the cytoplasmic vesicle membrane. The protein resides in the cytoplasm. Its subcellular location is the cytoskeleton. In terms of biological role, GTPase-activating protein (GAP) for rhoa and cdc42. The polypeptide is Rho GTPase-activating protein 21-B (arhgap21-b) (Xenopus laevis (African clawed frog)).